Reading from the N-terminus, the 102-residue chain is Large ribosomal subunit protein bL21 (102 aa).

Positions 80-91 (KNSKRKKGHRQP) are enriched in basic residues. Residues 80 to 102 (KNSKRKKGHRQPYTKLTIDKINA) are disordered.

It belongs to the bacterial ribosomal protein bL21 family. As to quaternary structure, part of the 50S ribosomal subunit. Contacts protein L20.

Its function is as follows. This protein binds to 23S rRNA in the presence of protein L20. This chain is Large ribosomal subunit protein bL21, found in Staphylococcus aureus (strain Mu3 / ATCC 700698).